The following is a 1339-amino-acid chain: Inhibitor of Bruton tyrosine kinase (1339 aa).

3 ANK repeats span residues F51–V81, S86–I115, and D119–F154. RCC1 repeat units lie at residues P142–Q195, K196–E247, and G249–K302. Residues H555 to L636 enclose the BTB 1 domain. Positions E685–T704 are disordered. A compositionally biased stretch (basic residues) spans G689–R698. Residues Y758–K826 enclose the BTB 2 domain. A compositionally biased stretch (basic residues) spans S970–K980. Disordered regions lie at residues S970–I993, R1058–T1089, and F1208–L1237. Residues D1214–R1231 show a composition bias toward basic and acidic residues.

It localises to the cytoplasm. Its subcellular location is the membrane. Its function is as follows. Acts as an inhibitor of BTK tyrosine kinase activity, thereby playing a role in B-cell development. This chain is Inhibitor of Bruton tyrosine kinase (ibtk), found in Xenopus laevis (African clawed frog).